A 208-amino-acid polypeptide reads, in one-letter code: Uracil phosphoribosyltransferase (208 aa).

Residues Arg-78, Arg-103, and 130 to 138 (DPMLATGGS) contribute to the 5-phospho-alpha-D-ribose 1-diphosphate site. Uracil-binding positions include Ile-193 and 198–200 (GDA). Position 199 (Asp-199) interacts with 5-phospho-alpha-D-ribose 1-diphosphate.

This sequence belongs to the UPRTase family. Mg(2+) serves as cofactor.

It catalyses the reaction UMP + diphosphate = 5-phospho-alpha-D-ribose 1-diphosphate + uracil. The protein operates within pyrimidine metabolism; UMP biosynthesis via salvage pathway; UMP from uracil: step 1/1. Allosterically activated by GTP. In terms of biological role, catalyzes the conversion of uracil and 5-phospho-alpha-D-ribose 1-diphosphate (PRPP) to UMP and diphosphate. In Pectobacterium atrosepticum (strain SCRI 1043 / ATCC BAA-672) (Erwinia carotovora subsp. atroseptica), this protein is Uracil phosphoribosyltransferase.